The chain runs to 145 residues: Ribonuclease P protein component (145 aa).

The segment at 121 to 145 (PAAAGTMPPARTVHPSSLSPTEPEL) is disordered. Over residues 134 to 145 (HPSSLSPTEPEL) the composition is skewed to polar residues.

Belongs to the RnpA family. In terms of assembly, consists of a catalytic RNA component (M1 or rnpB) and a protein subunit.

The catalysed reaction is Endonucleolytic cleavage of RNA, removing 5'-extranucleotides from tRNA precursor.. RNaseP catalyzes the removal of the 5'-leader sequence from pre-tRNA to produce the mature 5'-terminus. It can also cleave other RNA substrates such as 4.5S RNA. The protein component plays an auxiliary but essential role in vivo by binding to the 5'-leader sequence and broadening the substrate specificity of the ribozyme. In Xanthomonas axonopodis pv. citri (strain 306), this protein is Ribonuclease P protein component.